The primary structure comprises 465 residues: Ribulose bisphosphate carboxylase large chain (465 aa).

Lysine 4 bears the N6,N6,N6-trimethyllysine mark. Residues asparagine 113 and threonine 163 each contribute to the substrate site. Lysine 165 serves as the catalytic Proton acceptor. Lysine 167 lines the substrate pocket. 3 residues coordinate Mg(2+): lysine 191, aspartate 193, and glutamate 194. Lysine 191 carries the post-translational modification N6-carboxylysine. Residue histidine 284 is the Proton acceptor of the active site. Substrate contacts are provided by arginine 285, histidine 317, and serine 369.

It belongs to the RuBisCO large chain family. Type I subfamily. Heterohexadecamer of 8 large chains and 8 small chains; disulfide-linked. The disulfide link is formed within the large subunit homodimers. The cofactor is Mg(2+). The disulfide bond which can form in the large chain dimeric partners within the hexadecamer appears to be associated with oxidative stress and protein turnover.

The protein resides in the plastid. The protein localises to the chloroplast. The enzyme catalyses 2 (2R)-3-phosphoglycerate + 2 H(+) = D-ribulose 1,5-bisphosphate + CO2 + H2O. It carries out the reaction D-ribulose 1,5-bisphosphate + O2 = 2-phosphoglycolate + (2R)-3-phosphoglycerate + 2 H(+). Functionally, ruBisCO catalyzes two reactions: the carboxylation of D-ribulose 1,5-bisphosphate, the primary event in carbon dioxide fixation, as well as the oxidative fragmentation of the pentose substrate in the photorespiration process. Both reactions occur simultaneously and in competition at the same active site. The protein is Ribulose bisphosphate carboxylase large chain of Byrsonima crassifolia (Cajuil cimarron).